The sequence spans 636 residues: Alpha-L-iduronidase (636 aa).

Positions 1 to 16 (MLSLLLVLTTLARIHA) are cleaved as a signal peptide. Residues proline 39, isoleucine 43, and histidine 45 each coordinate alpha-D-mannopyranose. Residues histidine 78, asparagine 169, and glutamate 170 each coordinate alpha-L-iduronate. Glutamate 170 serves as the catalytic Proton donor. An N-linked (GlcNAc...) asparagine glycan is attached at asparagine 180. Alpha-L-iduronate is bound at residue lysine 257. Residue asparagine 268 is glycosylated (N-linked (GlcNAc...) asparagine). Residues glutamate 293 and glycine 299 each coordinate alpha-L-iduronate. The active-site Nucleophile is the glutamate 293. Residue tryptophan 300 participates in alpha-D-mannopyranose binding. The alpha-L-iduronate site is built by aspartate 342 and arginine 356. Residues asparagine 365, asparagine 448, asparagine 453, and asparagine 483 are each glycosylated (N-linked (GlcNAc...) asparagine). A disulfide bridge connects residues cysteine 529 and cysteine 565. An N-linked (GlcNAc...) asparagine glycan is attached at asparagine 622.

It belongs to the glycosyl hydrolase 39 family.

The protein localises to the lysosome. The enzyme catalyses Hydrolysis of unsulfated alpha-L-iduronosidic linkages in dermatan sulfate.. Its function is as follows. Essential lysosomal hydrolase responsible for the degradation of glycosaminoglycans (GAG) such as heparan sulfate. Required for lysosome function and autophagy. Consequently, has an essential role in the development, maintenance and function of various cells, tissues, and organs, including the muscles and the central nervous system (CNS). In Drosophila melanogaster (Fruit fly), this protein is Alpha-L-iduronidase.